The primary structure comprises 210 residues: ATP-dependent Clp protease proteolytic subunit (210 aa).

The Nucleophile role is filled by Ser-107. His-132 is an active-site residue.

The protein belongs to the peptidase S14 family. In terms of assembly, fourteen ClpP subunits assemble into 2 heptameric rings which stack back to back to give a disk-like structure with a central cavity, resembling the structure of eukaryotic proteasomes.

It is found in the cytoplasm. The catalysed reaction is Hydrolysis of proteins to small peptides in the presence of ATP and magnesium. alpha-casein is the usual test substrate. In the absence of ATP, only oligopeptides shorter than five residues are hydrolyzed (such as succinyl-Leu-Tyr-|-NHMec, and Leu-Tyr-Leu-|-Tyr-Trp, in which cleavage of the -Tyr-|-Leu- and -Tyr-|-Trp bonds also occurs).. In terms of biological role, cleaves peptides in various proteins in a process that requires ATP hydrolysis. Has a chymotrypsin-like activity. Plays a major role in the degradation of misfolded proteins. The chain is ATP-dependent Clp protease proteolytic subunit from Zymomonas mobilis subsp. mobilis (strain ATCC 31821 / ZM4 / CP4).